Here is a 37-residue protein sequence, read N- to C-terminus: Photosystem I reaction center subunit VIII (37 aa).

Residues 7-27 (LPAIFVPLVGLVFPAIAMVSL) form a helical membrane-spanning segment.

It belongs to the PsaI family.

The protein resides in the plastid. The protein localises to the chloroplast thylakoid membrane. Functionally, may help in the organization of the PsaL subunit. The sequence is that of Photosystem I reaction center subunit VIII from Morus indica (Mulberry).